A 496-amino-acid chain; its full sequence is Probable cytosol aminopeptidase (496 aa).

K262 and D267 together coordinate Mn(2+). Residue K274 is part of the active site. Mn(2+) is bound by residues D285, D344, and E346. R348 is a catalytic residue.

The protein belongs to the peptidase M17 family. Mn(2+) is required as a cofactor.

The protein localises to the cytoplasm. The catalysed reaction is Release of an N-terminal amino acid, Xaa-|-Yaa-, in which Xaa is preferably Leu, but may be other amino acids including Pro although not Arg or Lys, and Yaa may be Pro. Amino acid amides and methyl esters are also readily hydrolyzed, but rates on arylamides are exceedingly low.. It catalyses the reaction Release of an N-terminal amino acid, preferentially leucine, but not glutamic or aspartic acids.. Presumably involved in the processing and regular turnover of intracellular proteins. Catalyzes the removal of unsubstituted N-terminal amino acids from various peptides. In Rhizobium leguminosarum bv. trifolii (strain WSM2304), this protein is Probable cytosol aminopeptidase.